The chain runs to 530 residues: GH3 domain-containing protein (530 aa).

The first 17 residues, 1 to 17 (MLLWPLLLLLLLLPTLA), serve as a signal peptide directing secretion. Positions 99-122 (LTKASQTQQEDSGEQPLPPTSNQD) are disordered. N-linked (GlcNAc...) asparagine glycosylation is present at asparagine 450. Glutamine 489 bears the N5-methylglutamine mark.

The protein belongs to the GH3 family. Post-translationally, methylated at Gln-489 by N6AMT1.

It is found in the endoplasmic reticulum. Its subcellular location is the nucleus envelope. This chain is GH3 domain-containing protein (GHDC), found in Homo sapiens (Human).